Reading from the N-terminus, the 146-residue chain is Hemoglobin cathodic subunit beta (146 aa).

Residues 2 to 146 (HFSDAERDAI…VAAALSSRYF (145 aa)) enclose the Globin domain. The heme b site is built by H63 and H92.

It belongs to the globin family. Heterotetramer of two alpha chains and two beta chains. Red blood cells.

In terms of biological role, involved in oxygen transport from gills to the various peripheral tissues. This chain is Hemoglobin cathodic subunit beta (hbb), found in Hoplosternum littorale (Hassar).